The sequence spans 345 residues: Ninja-family protein AFP1 (345 aa).

Disordered regions lie at residues 114–185 and 201–256; these read TSLP…ATAN and QVSG…RRLS. Composition is skewed to basic and acidic residues over residues 123 to 132 and 222 to 232; these read EWRKRKEMQT and LETKASSDEAR. Positions 235-249 are enriched in low complexity; sequence PSTTQPQQETTTKPT.

The protein belongs to the Ninja family. As to quaternary structure, forms a heterodimer with AFP2. Interacts with ABI5/DPBF1, DPBF2, AREB3/DPBF3, ABF1, ABF3/DPBF5 and ABF4/AREB2.

The protein resides in the nucleus. In terms of biological role, acts as a negative regulator of abscisic acid (ABA) response during germination through the ubiquitin-mediated proteolysis of ABI5/DPBF1. The protein is Ninja-family protein AFP1 (AFP1) of Arabidopsis thaliana (Mouse-ear cress).